The primary structure comprises 573 residues: Membrane protein insertase YidC (573 aa).

A helical membrane pass occupies residues 6–26 (VFLIFAWLMVAALLWMEWGKD). Residues 63–82 (PQAGSPAAVPATSTTTATPA) are disordered. A run of 5 helical transmembrane segments spans residues 355–375 (FSIM…LHSF), 379–399 (WGWA…PLSA), 446–466 (GGCL…WVLV), 488–508 (PYFI…KLTP), and 524–544 (PLVF…YWVV).

The protein belongs to the OXA1/ALB3/YidC family. Type 1 subfamily. Interacts with the Sec translocase complex via SecD. Specifically interacts with transmembrane segments of nascent integral membrane proteins during membrane integration.

Its subcellular location is the cell inner membrane. Functionally, required for the insertion and/or proper folding and/or complex formation of integral membrane proteins into the membrane. Involved in integration of membrane proteins that insert both dependently and independently of the Sec translocase complex, as well as at least some lipoproteins. Aids folding of multispanning membrane proteins. The chain is Membrane protein insertase YidC from Xanthomonas campestris pv. campestris (strain 8004).